We begin with the raw amino-acid sequence, 1097 residues long: DNA-directed RNA polymerase subunit beta (1097 aa).

The interval 1072-1097 (QDINPRRNTPSRPTYESLGTSEYEED) is disordered. A compositionally biased stretch (polar residues) spans 1077–1091 (RRNTPSRPTYESLGT).

Belongs to the RNA polymerase beta chain family. In terms of assembly, in cyanobacteria the RNAP catalytic core is composed of 2 alpha, 1 beta, 1 beta', 1 gamma and 1 omega subunit. When a sigma factor is associated with the core the holoenzyme is formed, which can initiate transcription.

The enzyme catalyses RNA(n) + a ribonucleoside 5'-triphosphate = RNA(n+1) + diphosphate. Its function is as follows. DNA-dependent RNA polymerase catalyzes the transcription of DNA into RNA using the four ribonucleoside triphosphates as substrates. This is DNA-directed RNA polymerase subunit beta from Prochlorococcus marinus (strain MIT 9301).